Consider the following 455-residue polypeptide: Probable hexose phosphate transport protein (455 aa).

Helical transmembrane passes span 34–54, 70–90, 113–133, 161–181, and 185–205; these read IFYSMFIGYIFYYFTRKSFTF, LGIIGSTLYFSYGISKFVSGV, IFFGMSSSIVLFALWWGLNGW, VWSTSHNIGGALIPILTGFII, and GWRGAMYVPGILCIGMGLVLI. The tract at residues 219–242 is disordered; that stretch reads PIEKYKRDPHHAHHEGKSASEGTE. The next 6 helical transmembrane spans lie at 257–277, 302–322, 331–351, 363–383, 394–414, and 424–444; these read YVLTNQWLWFLAAASFFIYIV, FCVSLFEIGGLFGMLVAGWLS, GPMNVLFSLGLLFAILGMWFS, LLFVIGFFLYGPQMMIGLAAA, ASGFTGWFAYFGATFAGYPLG, and GFFIALLACASIALLLFLPTW.

Belongs to the major facilitator superfamily. Organophosphate:Pi antiporter (OPA) (TC 2.A.1.4) family.

The protein resides in the cell membrane. Its function is as follows. Transport protein for sugar phosphate uptake. This chain is Probable hexose phosphate transport protein (uhpC), found in Chlamydia pneumoniae (Chlamydophila pneumoniae).